Reading from the N-terminus, the 751-residue chain is Catalase-peroxidase (751 aa).

Positions 1–21 (MSNESKCPFHQTAGGGTTNRD) are disordered. Positions 90–244 (WHSAGTYRIG…LAAVQMGLIY (155 aa)) form a cross-link, tryptophyl-tyrosyl-methioninium (Trp-Tyr) (with M-270). Histidine 91 serves as the catalytic Proton acceptor. The disordered stretch occupies residues 195 to 227 (YGKDQVKAQPPGQGDLVAEPAKHGEEQNRDLSA). Residues 214 to 227 (PAKHGEEQNRDLSA) are compositionally biased toward basic and acidic residues. The tryptophyl-tyrosyl-methioninium (Tyr-Met) (with W-90) cross-link spans 244 to 270 (YVNPEGPEGNPDPVASGKDIRETFGRM). Position 285 (histidine 285) interacts with heme b. Positions 365-387 (AHQWRPKEGKGAGTVPDAHDPGK) are disordered.

Belongs to the peroxidase family. Peroxidase/catalase subfamily. In terms of assembly, homodimer or homotetramer. The cofactor is heme b. Formation of the three residue Trp-Tyr-Met cross-link is important for the catalase, but not the peroxidase activity of the enzyme.

It catalyses the reaction H2O2 + AH2 = A + 2 H2O. It carries out the reaction 2 H2O2 = O2 + 2 H2O. Functionally, bifunctional enzyme with both catalase and broad-spectrum peroxidase activity. In Pseudomonas putida (strain ATCC 700007 / DSM 6899 / JCM 31910 / BCRC 17059 / LMG 24140 / F1), this protein is Catalase-peroxidase.